The primary structure comprises 205 residues: Small ribosomal subunit protein uS4 (205 aa).

The tract at residues 21-47 (GRPKSPFNKRDYGPGQHGQGRKGKPSD) is disordered. The 61-residue stretch at 94 to 154 (RRLDSVVYRA…DKSKQLAIID (61 aa)) folds into the S4 RNA-binding domain.

The protein belongs to the universal ribosomal protein uS4 family. Part of the 30S ribosomal subunit. Contacts protein S5. The interaction surface between S4 and S5 is involved in control of translational fidelity.

Its function is as follows. One of the primary rRNA binding proteins, it binds directly to 16S rRNA where it nucleates assembly of the body of the 30S subunit. With S5 and S12 plays an important role in translational accuracy. The sequence is that of Small ribosomal subunit protein uS4 from Pelagibacter ubique (strain HTCC1062).